Consider the following 319-residue polypeptide: MKKSLTSLDLNLLLCLQLLMQERSVTKAAKRMNVTPSAVSKSLAKLRAWFDDPLFVNTPLGLAPTPLMVSMEQSLADWMQMGNQLLDKPHHQTPRGLKFELAAESPLMMIMFNSLSQQIYQRYPQATIKVRNWDYDSLEAITRGEVDIGFTGRESHPRSRELLSLLPLAIDFEVLFSDLPWVWLREDHPALREAWDLDTFLRYPHISICWEQSDTWALDDVLQEMGRKRHIALSLPGFEQSLFMAAQPGHTLIATAPRYCQHYNQLHQLPLVARPLPFDAQQREKLMVPFTLLWHKRNSHNPKIVWLRQAINTLCRRLI.

The region spanning 8 to 65 (LDLNLLLCLQLLMQERSVTKAAKRMNVTPSAVSKSLAKLRAWFDDPLFVNTPLGLAPT) is the HTH lysR-type domain. The H-T-H motif DNA-binding region spans 25-44 (VTKAAKRMNVTPSAVSKSLA).

The protein belongs to the LysR transcriptional regulatory family.

Involved in anaerobic NO protection. This is HTH-type transcriptional regulator YidZ from Salmonella heidelberg (strain SL476).